A 285-amino-acid polypeptide reads, in one-letter code: Foldase protein PrsA 2 (285 aa).

The N-terminal stretch at 1-20 is a signal peptide; the sequence is MRGKHIFIITALISILMLAA. The N-palmitoyl cysteine moiety is linked to residue cysteine 21. The S-diacylglycerol cysteine moiety is linked to residue cysteine 21. The region spanning 134 to 224 is the PpiC domain; that stretch reads KPEIKASHIL…NGYHIIKLTG (91 aa).

Belongs to the PrsA family.

The protein localises to the cell membrane. The catalysed reaction is [protein]-peptidylproline (omega=180) = [protein]-peptidylproline (omega=0). Plays a major role in protein secretion by helping the post-translocational extracellular folding of several secreted proteins. Important for the secretion of the protective antigen. The three PsrA proteins in this organism show different but overlapping substrate specificities. This is Foldase protein PrsA 2 (prsA2) from Bacillus anthracis.